The sequence spans 550 residues: MELLAASRACIFFGLVTVLDAWGVQQVELSEGAWAMIDGRDVLTPTNTTTRVTKAWTFLETPPGCAGDISVKKVCVSHSLCEDNIIIGKHCNLLTGEHGIALAEFNVVNGSLRRTDDVYFVNGTVFPILAETRSVLQIHRATPSIAGVYTLHVSIDGMMKHSVVLLTVKKPPKQPQPRLRVKTPPPVTVPQVPVKTHTDFVVHGYHSRVYADGESFELSVNLESHIVEPSFSAEIQWYYMNTSSSSCDLFRVFETCIFHPTAMACLHPEQHTCSFTSPIRATKILHRVYGNCSDHGNSWPSRCHSTLLGNRLYFIQPAQNRVDLLFKDTPASATGLYVFVLLYNGHPEAWTYTLLSTANHFMNVLTDVTRPRLGEHFYTDLGHKIITPHPSVATTEELGAWTRHYLAFLLVIICTCAALLVALVVWGCILYIRSNRKPYEVLNPFETVYTSVPSNDPSDEVLVFERLASDSDDSFDSDSDEELEYPPPPKPAPQLPPYQFVDGGDAPSGRSGFKVWFRDTPEASPVPLHKPTLQGPDYSRVASKLKSILK.

Positions 1–23 are cleaved as a signal peptide; it reads MELLAASRACIFFGLVTVLDAWG. Residues 24–408 are Virion surface-facing; it reads VQQVELSEGA…GAWTRHYLAF (385 aa). A glycan (N-linked (GlcNAc...) asparagine; by host) is linked at asparagine 47. Residues 65-91 form an interaction with gI region; the sequence is CAGDISVKKVCVSHSLCEDNIIIGKHC. N-linked (GlcNAc...) asparagine; by host glycosylation is found at asparagine 109, asparagine 122, and asparagine 241. 2 disulfide bridges follow: cysteine 247–cysteine 273 and cysteine 256–cysteine 265. A glycan (N-linked (GlcNAc...) asparagine; by host) is linked at asparagine 291. The cysteines at positions 292 and 303 are disulfide-linked. The chain crosses the membrane as a helical span at residues 409-425; that stretch reads LLVIICTCAALLVALVV. Topologically, residues 426-550 are intravirion; it reads WGCILYIRSN…VASKLKSILK (125 aa). The Internalization motif motif lies at 449 to 452; sequence YTSV. An acidic region spans residues 468-482; it reads ASDSDDSFDSDSDEE. The span at 471-484 shows a compositional bias: acidic residues; that stretch reads SDDSFDSDSDEELE. Positions 471–513 are disordered; sequence SDDSFDSDSDEELEYPPPPKPAPQLPPYQFVDGGDAPSGRSGF. Residues 485–496 are compositionally biased toward pro residues; that stretch reads YPPPPKPAPQLP.

This sequence belongs to the alphaherpesvirinae glycoprotein E family. Interacts with gI. Phosphorylated on serines within the acidic cluster. Phosphorylation determines whether endocytosed viral gE traffics to the trans-Golgi network or recycles to the cell membrane.

The protein localises to the virion membrane. Its subcellular location is the host cell membrane. It is found in the host cell junction. It localises to the host Golgi apparatus membrane. The protein resides in the host endosome membrane. Functionally, in epithelial cells, the heterodimer gE/gI is required for the cell-to-cell spread of the virus, by sorting nascent virions to cell junctions. Once the virus reaches the cell junctions, virus particles can spread to adjacent cells extremely rapidly through interactions with cellular receptors that accumulate at these junctions. Implicated in basolateral spread in polarized cells. In neuronal cells, gE/gI is essential for the anterograde spread of the infection throughout the host nervous system. Together with US9, the heterodimer gE/gI is involved in the sorting and transport of viral structural components toward axon tips. In Equus caballus (Horse), this protein is Envelope glycoprotein E (gE).